A 299-amino-acid polypeptide reads, in one-letter code: N-acetylaspartate synthetase (299 aa).

Pro residues predominate over residues 44 to 57 (AAPGPAAAPPPAAG). The segment at 44–70 (AAPGPAAAPPPAAGPQPHGGTGGAGPP) is disordered. Over residues 60–70 (PHGGTGGAGPP) the composition is skewed to gly residues. A helical membrane pass occupies residues 118-138 (YALLAALCFAVTRSLLLTCLV). In terms of domain architecture, N-acetyltransferase spans 143-280 (LALRYYYSRK…VLPGMTLSLA (138 aa)).

Belongs to the NAT8 family. As to expression, expressed in brain, kidney, liver and spleen. In brain, present in neurons but not in astrocytes (at protein level). Expressed in brain, thymus and spleen.

The protein localises to the cytoplasm. It localises to the microsome membrane. It is found in the mitochondrion membrane. Its subcellular location is the endoplasmic reticulum membrane. The catalysed reaction is L-aspartate + acetyl-CoA = N-acetyl-L-aspartate + CoA + H(+). Its activity is regulated as follows. Aminooxyacetic acid (AOAA) blocks its activity in both cytoplasm and mitochondria. Its function is as follows. Catalyzes the synthesis of N-acetylaspartate acid (NAA) from L-aspartate and acetyl-CoA. Promotes dopamine uptake by regulating TNF-alpha expression. Attenuates methamphetamine-induced inhibition of dopamine uptake. This is N-acetylaspartate synthetase (Nat8l) from Mus musculus (Mouse).